A 134-amino-acid polypeptide reads, in one-letter code: Translation initiation factor 2 subunit beta (134 aa).

This sequence belongs to the eIF-2-beta/eIF-5 family. Heterotrimer composed of an alpha, a beta and a gamma chain.

Functionally, eIF-2 functions in the early steps of protein synthesis by forming a ternary complex with GTP and initiator tRNA. This Pyrobaculum neutrophilum (strain DSM 2338 / JCM 9278 / NBRC 100436 / V24Sta) (Thermoproteus neutrophilus) protein is Translation initiation factor 2 subunit beta.